The primary structure comprises 260 residues: Indole-3-glycerol phosphate synthase (260 aa).

The protein belongs to the TrpC family.

It carries out the reaction 1-(2-carboxyphenylamino)-1-deoxy-D-ribulose 5-phosphate + H(+) = (1S,2R)-1-C-(indol-3-yl)glycerol 3-phosphate + CO2 + H2O. Its pathway is amino-acid biosynthesis; L-tryptophan biosynthesis; L-tryptophan from chorismate: step 4/5. In Thermoanaerobacter pseudethanolicus (strain ATCC 33223 / 39E) (Clostridium thermohydrosulfuricum), this protein is Indole-3-glycerol phosphate synthase.